Consider the following 274-residue polypeptide: Diaminopimelate epimerase (274 aa).

3 residues coordinate substrate: N11, Q44, and N64. The Proton donor role is filled by C73. Residues 74–75, N157, N190, and 208–209 each bind substrate; these read GN and ER. The active-site Proton acceptor is the C217. 218–219 contacts substrate; it reads GS.

It belongs to the diaminopimelate epimerase family. As to quaternary structure, homodimer.

The protein localises to the cytoplasm. It catalyses the reaction (2S,6S)-2,6-diaminopimelate = meso-2,6-diaminopimelate. The protein operates within amino-acid biosynthesis; L-lysine biosynthesis via DAP pathway; DL-2,6-diaminopimelate from LL-2,6-diaminopimelate: step 1/1. Functionally, catalyzes the stereoinversion of LL-2,6-diaminopimelate (L,L-DAP) to meso-diaminopimelate (meso-DAP), a precursor of L-lysine and an essential component of the bacterial peptidoglycan. This chain is Diaminopimelate epimerase, found in Escherichia coli O81 (strain ED1a).